A 208-amino-acid polypeptide reads, in one-letter code: Uracil phosphoribosyltransferase (208 aa).

Residues Arg78, Arg103, and 130–138 (DPMLATGGS) contribute to the 5-phospho-alpha-D-ribose 1-diphosphate site. Residues Ile193 and 198 to 200 (GDA) each bind uracil. Asp199 provides a ligand contact to 5-phospho-alpha-D-ribose 1-diphosphate.

The protein belongs to the UPRTase family. Mg(2+) is required as a cofactor.

It catalyses the reaction UMP + diphosphate = 5-phospho-alpha-D-ribose 1-diphosphate + uracil. The protein operates within pyrimidine metabolism; UMP biosynthesis via salvage pathway; UMP from uracil: step 1/1. Allosterically activated by GTP. Its function is as follows. Catalyzes the conversion of uracil and 5-phospho-alpha-D-ribose 1-diphosphate (PRPP) to UMP and diphosphate. The protein is Uracil phosphoribosyltransferase of Thermus thermophilus (strain ATCC 27634 / DSM 579 / HB8).